A 232-amino-acid chain; its full sequence is Probable transcriptional regulatory protein Bd1964 (232 aa).

Belongs to the TACO1 family.

The protein resides in the cytoplasm. This Bdellovibrio bacteriovorus (strain ATCC 15356 / DSM 50701 / NCIMB 9529 / HD100) protein is Probable transcriptional regulatory protein Bd1964.